The primary structure comprises 158 residues: Cyclic pyranopterin monophosphate synthase (158 aa).

Residues 75–77 (LCH) and 113–114 (ME) contribute to the substrate site. The active site involves Asp-128.

It belongs to the MoaC family. As to quaternary structure, homohexamer; trimer of dimers.

It carries out the reaction (8S)-3',8-cyclo-7,8-dihydroguanosine 5'-triphosphate = cyclic pyranopterin phosphate + diphosphate. It participates in cofactor biosynthesis; molybdopterin biosynthesis. Catalyzes the conversion of (8S)-3',8-cyclo-7,8-dihydroguanosine 5'-triphosphate to cyclic pyranopterin monophosphate (cPMP). The sequence is that of Cyclic pyranopterin monophosphate synthase from Roseiflexus castenholzii (strain DSM 13941 / HLO8).